A 144-amino-acid polypeptide reads, in one-letter code: Large ribosomal subunit protein uL15 (144 aa).

The tract at residues 1-54 (MKLNTIKPAEGAKHARRRVGRGIGSGLGKTGGRGHKGQKSRAGGFHKVGFEGGQ) is disordered. Positions 21 to 31 (RGIGSGLGKTG) are enriched in gly residues.

This sequence belongs to the universal ribosomal protein uL15 family. As to quaternary structure, part of the 50S ribosomal subunit.

Its function is as follows. Binds to the 23S rRNA. The polypeptide is Large ribosomal subunit protein uL15 (Methylobacillus flagellatus (strain ATCC 51484 / DSM 6875 / VKM B-1610 / KT)).